The sequence spans 229 residues: Large ribosomal subunit protein uL1 (229 aa).

It belongs to the universal ribosomal protein uL1 family. Part of the 50S ribosomal subunit.

Its function is as follows. Binds directly to 23S rRNA. The L1 stalk is quite mobile in the ribosome, and is involved in E site tRNA release. In terms of biological role, protein L1 is also a translational repressor protein, it controls the translation of the L11 operon by binding to its mRNA. This chain is Large ribosomal subunit protein uL1, found in Haemophilus ducreyi (strain 35000HP / ATCC 700724).